Here is a 208-residue protein sequence, read N- to C-terminus: Uracil phosphoribosyltransferase (208 aa).

5-phospho-alpha-D-ribose 1-diphosphate is bound by residues Arg-78, Arg-103, and 130-138; that span reads DPMLATGGS. Uracil is bound by residues Ile-193 and 198-200; that span reads GDA. Asp-199 contacts 5-phospho-alpha-D-ribose 1-diphosphate.

Belongs to the UPRTase family. The cofactor is Mg(2+).

The enzyme catalyses UMP + diphosphate = 5-phospho-alpha-D-ribose 1-diphosphate + uracil. The protein operates within pyrimidine metabolism; UMP biosynthesis via salvage pathway; UMP from uracil: step 1/1. With respect to regulation, allosterically activated by GTP. Functionally, catalyzes the conversion of uracil and 5-phospho-alpha-D-ribose 1-diphosphate (PRPP) to UMP and diphosphate. The polypeptide is Uracil phosphoribosyltransferase (Aeromonas salmonicida (strain A449)).